The primary structure comprises 326 residues: Undecaprenyl-phosphate 4-deoxy-4-formamido-L-arabinose transferase (326 aa).

2 consecutive transmembrane segments (helical) span residues 235 to 255 (LLSVVGSVVALSGFLLAVLLI) and 270 to 290 (VFTLFAVLFTFIGAQFVGMGL).

Belongs to the glycosyltransferase 2 family.

The protein resides in the cell inner membrane. The enzyme catalyses UDP-4-deoxy-4-formamido-beta-L-arabinose + di-trans,octa-cis-undecaprenyl phosphate = 4-deoxy-4-formamido-alpha-L-arabinopyranosyl di-trans,octa-cis-undecaprenyl phosphate + UDP. Its pathway is glycolipid biosynthesis; 4-amino-4-deoxy-alpha-L-arabinose undecaprenyl phosphate biosynthesis; 4-amino-4-deoxy-alpha-L-arabinose undecaprenyl phosphate from UDP-4-deoxy-4-formamido-beta-L-arabinose and undecaprenyl phosphate: step 1/2. The protein operates within bacterial outer membrane biogenesis; lipopolysaccharide biosynthesis. Its function is as follows. Catalyzes the transfer of 4-deoxy-4-formamido-L-arabinose from UDP to undecaprenyl phosphate. The modified arabinose is attached to lipid A and is required for resistance to polymyxin and cationic antimicrobial peptides. In Serratia proteamaculans (strain 568), this protein is Undecaprenyl-phosphate 4-deoxy-4-formamido-L-arabinose transferase.